The sequence spans 179 residues: DNA utilization protein HofN (179 aa).

Residues 19-39 form a helical membrane-spanning segment; that stretch reads LRFWLLMFVAPLLLAVGITLI.

Its subcellular location is the cell inner membrane. Functionally, required for the use of extracellular DNA as a nutrient. The chain is DNA utilization protein HofN (hofN) from Escherichia coli (strain K12).